The primary structure comprises 375 residues: MARGVILLAAGGTGGHLFPAEALAHELNGRGWTVHLATDDRAERFAGHFPAAAVHPIQSATMGSKNPIAVLGAFWKIWRGVRQASTIIGRIKPDAVVGFGGYPTLPPLYAATRRKVPTLIHEQNAVMGRANRALAGRVDAIAGGFLPQDTSAAGEKTVTTGNPVRPAVLEAAKTPYAASTGQEPFRLLVFGGSQGAQFFSDAMPGAIALLSDAQRKRLVITQQARADDVARVKTAYAALGVAVEVSPFFTDMAARMAAAHLVISRSGASTVSEIAVIGRPALLVPYPFALDHDQAANAAALAAAGGGEVHPQSTLSPERIAALIGGLMDNPERLAAMAAGAKSVGRPDAARLLADLTEAIASQKTVSDFKKGTQA.

UDP-N-acetyl-alpha-D-glucosamine contacts are provided by residues 13–15 (TGG), asparagine 124, arginine 165, serine 193, and glutamine 294.

Belongs to the glycosyltransferase 28 family. MurG subfamily.

It is found in the cell inner membrane. The enzyme catalyses di-trans,octa-cis-undecaprenyl diphospho-N-acetyl-alpha-D-muramoyl-L-alanyl-D-glutamyl-meso-2,6-diaminopimeloyl-D-alanyl-D-alanine + UDP-N-acetyl-alpha-D-glucosamine = di-trans,octa-cis-undecaprenyl diphospho-[N-acetyl-alpha-D-glucosaminyl-(1-&gt;4)]-N-acetyl-alpha-D-muramoyl-L-alanyl-D-glutamyl-meso-2,6-diaminopimeloyl-D-alanyl-D-alanine + UDP + H(+). The protein operates within cell wall biogenesis; peptidoglycan biosynthesis. Functionally, cell wall formation. Catalyzes the transfer of a GlcNAc subunit on undecaprenyl-pyrophosphoryl-MurNAc-pentapeptide (lipid intermediate I) to form undecaprenyl-pyrophosphoryl-MurNAc-(pentapeptide)GlcNAc (lipid intermediate II). The chain is UDP-N-acetylglucosamine--N-acetylmuramyl-(pentapeptide) pyrophosphoryl-undecaprenol N-acetylglucosamine transferase from Mesorhizobium japonicum (strain LMG 29417 / CECT 9101 / MAFF 303099) (Mesorhizobium loti (strain MAFF 303099)).